A 155-amino-acid chain; its full sequence is SsrA-binding protein (155 aa).

This sequence belongs to the SmpB family.

It localises to the cytoplasm. In terms of biological role, required for rescue of stalled ribosomes mediated by trans-translation. Binds to transfer-messenger RNA (tmRNA), required for stable association of tmRNA with ribosomes. tmRNA and SmpB together mimic tRNA shape, replacing the anticodon stem-loop with SmpB. tmRNA is encoded by the ssrA gene; the 2 termini fold to resemble tRNA(Ala) and it encodes a 'tag peptide', a short internal open reading frame. During trans-translation Ala-aminoacylated tmRNA acts like a tRNA, entering the A-site of stalled ribosomes, displacing the stalled mRNA. The ribosome then switches to translate the ORF on the tmRNA; the nascent peptide is terminated with the 'tag peptide' encoded by the tmRNA and targeted for degradation. The ribosome is freed to recommence translation, which seems to be the essential function of trans-translation. The protein is SsrA-binding protein of Geobacillus sp. (strain WCH70).